A 365-amino-acid polypeptide reads, in one-letter code: Probable dual-specificity RNA methyltransferase RlmN (365 aa).

Glu108 (proton acceptor) is an active-site residue. The region spanning 114–347 (HNYGNSVCVT…VTIRREHGHD (234 aa)) is the Radical SAM core domain. The cysteines at positions 121 and 352 are disulfide-linked. Residues Cys128, Cys132, and Cys135 each coordinate [4Fe-4S] cluster. Residues 178-179 (GE), Ser210, 233-235 (SLH), and Asn309 each bind S-adenosyl-L-methionine. The active-site S-methylcysteine intermediate is the Cys352.

This sequence belongs to the radical SAM superfamily. RlmN family. [4Fe-4S] cluster serves as cofactor.

It localises to the cytoplasm. The enzyme catalyses adenosine(2503) in 23S rRNA + 2 reduced [2Fe-2S]-[ferredoxin] + 2 S-adenosyl-L-methionine = 2-methyladenosine(2503) in 23S rRNA + 5'-deoxyadenosine + L-methionine + 2 oxidized [2Fe-2S]-[ferredoxin] + S-adenosyl-L-homocysteine. It catalyses the reaction adenosine(37) in tRNA + 2 reduced [2Fe-2S]-[ferredoxin] + 2 S-adenosyl-L-methionine = 2-methyladenosine(37) in tRNA + 5'-deoxyadenosine + L-methionine + 2 oxidized [2Fe-2S]-[ferredoxin] + S-adenosyl-L-homocysteine. Functionally, specifically methylates position 2 of adenine 2503 in 23S rRNA and position 2 of adenine 37 in tRNAs. This Geobacillus kaustophilus (strain HTA426) protein is Probable dual-specificity RNA methyltransferase RlmN.